The primary structure comprises 165 residues: MKTSRLPIAIQQAVMRRLREKLAQANLKLGRNYPEPKLSYTQRGTSAGTAWLESYEIRLNPVLLLENSEAFIEEVVPHELAHLLVWKHFGRVAPHGKEWKWMMENVLGVPARRTHQFELQSVRRNTFPYRCKCQEHQLTVRRHNRVVRGEAVYRCVHCGEQLVAK.

Residues 20–163 (EKLAQANLKL…RCVHCGEQLV (144 aa)) form the SprT-like domain. Histidine 78 is a Zn(2+) binding site. Residue glutamate 79 is part of the active site. Histidine 82 contributes to the Zn(2+) binding site.

Belongs to the SprT family. The cofactor is Zn(2+).

It localises to the cytoplasm. The protein is Protein SprT of Escherichia coli (strain K12 / MC4100 / BW2952).